The sequence spans 524 residues: Leucine-rich repeat-containing protein 1 (524 aa).

17 LRR repeats span residues Asn-11–Tyr-34, Ala-35–Leu-58, Lys-60–Phe-81, Gln-83–Lys-105, Leu-107–Glu-126, Leu-127–Asn-149, Leu-150–Gln-172, Leu-173–Leu-196, His-198–Asn-218, Leu-219–Leu-242, Ser-244–Lys-264, Leu-265–Cys-288, Asn-290–Lys-310, Leu-311–Cys-334, Ser-336–Gln-356, Ala-357–Leu-380, and Leu-382–Ala-405. A coiled-coil region spans residues Ser-456–Glu-512. Residues Glu-464 to Glu-485 form a disordered region. Thr-480 carries the phosphothreonine modification.

In terms of assembly, interacts with DLG1. May form a complex with DLG1 and ERBIN, where interaction between LRRC1 and ERBIN is indirect.

The protein resides in the cytoplasm. Its subcellular location is the membrane. This Mus musculus (Mouse) protein is Leucine-rich repeat-containing protein 1 (Lrrc1).